A 468-amino-acid polypeptide reads, in one-letter code: Transcription factor ste11 (468 aa).

Positions 1–21 are disordered; it reads MSASLTAEQKDQKSSVKRPLN. Residues 16-80 constitute a DNA-binding region (HMG box); sequence VKRPLNSFML…KHMLENPEYK (65 aa). At threonine 173 the chain carries Phosphothreonine. Residues serine 209, serine 211, and serine 218 each carry the phosphoserine modification. Polar residues-rich tracts occupy residues 249 to 263 and 274 to 285; these read PSLE…SNCS and GTVSEQSNSDSP. The tract at residues 249-290 is disordered; sequence PSLEANLPQNSSNCSARRVPKFDSKGTVSEQSNSDSPELSAD.

In terms of processing, phosphorylation results in inactivation.

The protein localises to the nucleus. It is found in the cytoplasm. In terms of biological role, key transcription factor for sexual development. Activates the transcription of the matp, matm, mei2, mfm, ste6 and rgs1 genes. Binds specifically to a DNA fragment carrying a 10-base motif 5'-TTCTTTGTTY-3'. The protein is Transcription factor ste11 (ste11) of Schizosaccharomyces pombe (strain 972 / ATCC 24843) (Fission yeast).